We begin with the raw amino-acid sequence, 81 residues long: Cytotoxin I-like T-15 (81 aa).

The first 21 residues, Met-1 to Thr-21, serve as a signal peptide directing secretion. Disulfide bonds link Cys-24/Cys-42, Cys-35/Cys-59, Cys-63/Cys-74, and Cys-75/Cys-80.

This sequence belongs to the three-finger toxin family. Short-chain subfamily. Type IA cytotoxin sub-subfamily. In terms of assembly, monomer in solution; Homodimer and oligomer in the presence of negatively charged lipids forming a pore with a size ranging between 20 and 30 Angstroms. As to expression, expressed by the venom gland.

The protein resides in the secreted. It localises to the target cell membrane. Functionally, shows cytolytic activity on many different cells by forming pore in lipid membranes. In vivo, increases heart rate or kills the animal by cardiac arrest. In addition, it binds to heparin with high affinity, interacts with Kv channel-interacting protein 1 (KCNIP1) in a calcium-independent manner, and binds to integrin alpha-V/beta-3 (ITGAV/ITGB3) with moderate affinity. This Naja atra (Chinese cobra) protein is Cytotoxin I-like T-15.